Consider the following 152-residue polypeptide: Ribonuclease pancreatic beta-type (152 aa).

Residues 1–25 (MGLEKSFILFSLLVLVLGWVQPSLG) form the signal peptide. Residues 31–45 (SSADKFKRQHMDPES) show a composition bias toward basic and acidic residues. The interval 31 to 53 (SSADKFKRQHMDPESPSKSSPTY) is disordered. Substrate contacts are provided by Lys35 and Arg38. The active-site Proton acceptor is His40. Intrachain disulfides connect Cys54–Cys112, Cys68–Cys123, Cys86–Cys138, and Cys93–Cys100. Residues 69–73 (KPVNT), Lys94, and Arg113 contribute to the substrate site. The active-site Proton donor is the His147.

This sequence belongs to the pancreatic ribonuclease family. Monomer.

It localises to the secreted. The catalysed reaction is an [RNA] containing cytidine + H2O = an [RNA]-3'-cytidine-3'-phosphate + a 5'-hydroxy-ribonucleotide-3'-[RNA].. It carries out the reaction an [RNA] containing uridine + H2O = an [RNA]-3'-uridine-3'-phosphate + a 5'-hydroxy-ribonucleotide-3'-[RNA].. Endonuclease that catalyzes the cleavage of RNA on the 3' side of pyrimidine nucleotides. Acts on single-stranded and double-stranded RNA. The sequence is that of Ribonuclease pancreatic beta-type from Rattus exulans (Polynesian rat).